Reading from the N-terminus, the 688-residue chain is PTS system glucoside-specific EIICBA component (688 aa).

One can recognise a PTS EIIC type-1 domain in the interval 3–427 (KKLFGQLQRI…FKLKTPGRED (425 aa)). Helical transmembrane passes span 12 to 32 (IGKA…LLAF), 81 to 101 (LGLA…YLIM), 137 to 157 (LVLG…MGAL), 182 to 202 (FVPI…SFAW), 223 to 243 (LTTF…LHHI), 284 to 304 (AFTT…AFAI), 315 to 335 (VVGG…ITEP), 340 to 360 (FLFV…TSFL), 364 to 384 (LLGV…ILYG), and 395 to 415 (LVIP…DFAI). The 82-residue stretch at 438–519 (AKLPFDVLDA…AKIMSGEITK (82 aa)) folds into the PTS EIIB type-1 domain. The active-site Phosphocysteine intermediate; for EIIB activity is Cys460. Positions 560-664 (DQVFAGKMMG…SIVTPMIITN (105 aa)) constitute a PTS EIIA type-1 domain. The active-site Tele-phosphohistidine intermediate; for EIIA activity is the His612.

It localises to the cell membrane. Functionally, the phosphoenolpyruvate-dependent sugar phosphotransferase system (sugar PTS), a major carbohydrate active -transport system, catalyzes the phosphorylation of incoming sugar substrates concomitantly with their translocation across the cell membrane. This system is involved in alpha- and beta-glucoside transport. The polypeptide is PTS system glucoside-specific EIICBA component (glcB) (Staphylococcus aureus (strain Mu3 / ATCC 700698)).